The chain runs to 87 residues: Small ribosomal subunit protein bS21 (87 aa).

A compositionally biased stretch (basic and acidic residues) spans 47–63; the sequence is YEKPSEKRARQKAEAVR. The tract at residues 47–87 is disordered; sequence YEKPSEKRARQKAEAVRRARKLARKRAQREGLLPMPKKPGR. The span at 64–73 shows a compositional bias: basic residues; the sequence is RARKLARKRA.

The protein belongs to the bacterial ribosomal protein bS21 family.

This is Small ribosomal subunit protein bS21 from Caulobacter vibrioides (strain ATCC 19089 / CIP 103742 / CB 15) (Caulobacter crescentus).